Here is a 474-residue protein sequence, read N- to C-terminus: Siroheme synthase (474 aa).

Residues 1 to 203 (MKLFPLFADL…QRPEEAERLL (203 aa)) are precorrin-2 dehydrogenase /sirohydrochlorin ferrochelatase. NAD(+)-binding positions include 22–23 (EI) and 43–44 (PA). Ser-128 is modified (phosphoserine). The uroporphyrinogen-III C-methyltransferase stretch occupies residues 216-474 (GSVVLVGAGP…QRPAPAALAA (259 aa)). Pro-225 is a binding site for S-adenosyl-L-methionine. The Proton acceptor role is filled by Asp-248. The active-site Proton donor is the Lys-270. Residues 302 to 304 (GGD), Ile-307, 332 to 333 (TA), Met-384, and Gly-413 each bind S-adenosyl-L-methionine.

In the N-terminal section; belongs to the precorrin-2 dehydrogenase / sirohydrochlorin ferrochelatase family. It in the C-terminal section; belongs to the precorrin methyltransferase family.

The catalysed reaction is uroporphyrinogen III + 2 S-adenosyl-L-methionine = precorrin-2 + 2 S-adenosyl-L-homocysteine + H(+). The enzyme catalyses precorrin-2 + NAD(+) = sirohydrochlorin + NADH + 2 H(+). It catalyses the reaction siroheme + 2 H(+) = sirohydrochlorin + Fe(2+). It functions in the pathway cofactor biosynthesis; adenosylcobalamin biosynthesis; precorrin-2 from uroporphyrinogen III: step 1/1. The protein operates within cofactor biosynthesis; adenosylcobalamin biosynthesis; sirohydrochlorin from precorrin-2: step 1/1. It participates in porphyrin-containing compound metabolism; siroheme biosynthesis; precorrin-2 from uroporphyrinogen III: step 1/1. Its pathway is porphyrin-containing compound metabolism; siroheme biosynthesis; siroheme from sirohydrochlorin: step 1/1. It functions in the pathway porphyrin-containing compound metabolism; siroheme biosynthesis; sirohydrochlorin from precorrin-2: step 1/1. In terms of biological role, multifunctional enzyme that catalyzes the SAM-dependent methylations of uroporphyrinogen III at position C-2 and C-7 to form precorrin-2 via precorrin-1. Then it catalyzes the NAD-dependent ring dehydrogenation of precorrin-2 to yield sirohydrochlorin. Finally, it catalyzes the ferrochelation of sirohydrochlorin to yield siroheme. The chain is Siroheme synthase from Bordetella petrii (strain ATCC BAA-461 / DSM 12804 / CCUG 43448).